Reading from the N-terminus, the 122-residue chain is Piercer of microtubule wall 2 protein (122 aa).

Residues 1–23 are compositionally biased toward basic and acidic residues; that stretch reads MARETDCDLDKKTSLTSDAEMRP. Disordered regions lie at residues 1–26 and 99–122; these read MARE…PEPP and QNNS…QHTL. The segment covering 113 to 122 has biased composition (polar residues); that stretch reads IDSPNYQHTL.

This sequence belongs to the PIERCE2 family. Microtubule inner protein component of sperm flagellar doublet microtubules. Interacts with CFAP53, ODAD1 and ODAD3; the interactions link the outer dynein arms docking complex (ODA-DC) to the internal microtubule inner proteins (MIP) in cilium axoneme.

It localises to the cytoplasm. Its subcellular location is the cytoskeleton. The protein localises to the cilium axoneme. It is found in the flagellum axoneme. In terms of biological role, microtubule inner protein involved in the attachment of outer dynein arms (ODAs) to dynein-decorated doublet microtubules (DMTs) in cilia axoneme, which is required for motile cilia beating. The protein is Piercer of microtubule wall 2 protein of Mus musculus (Mouse).